The sequence spans 539 residues: Chaperonin GroEL (539 aa).

Residues Thr30 to Pro33, Asp87 to Thr91, Gly414, Asp479 to Leu481, and Asp495 each bind ATP.

The protein belongs to the chaperonin (HSP60) family. As to quaternary structure, forms a cylinder of 14 subunits composed of two heptameric rings stacked back-to-back. Interacts with the co-chaperonin GroES.

The protein resides in the cytoplasm. It catalyses the reaction ATP + H2O + a folded polypeptide = ADP + phosphate + an unfolded polypeptide.. Its function is as follows. Together with its co-chaperonin GroES, plays an essential role in assisting protein folding. The GroEL-GroES system forms a nano-cage that allows encapsulation of the non-native substrate proteins and provides a physical environment optimized to promote and accelerate protein folding. The protein is Chaperonin GroEL of Caldicellulosiruptor saccharolyticus (strain ATCC 43494 / DSM 8903 / Tp8T 6331).